The primary structure comprises 712 residues: Dipeptidyl-peptidase 7 (712 aa).

Residues 1–23 (MQMKLKSILLGAALLLGASGVAK) form the signal peptide. Histidine 89 serves as the catalytic Charge relay system. A coiled-coil region spans residues 136–173 (TDKVEGQLKGITDEMERLRKAQEVCQELAKKENADENQ). Active-site charge relay system residues include aspartate 225 and serine 648.

This sequence belongs to the peptidase S46 family.

The protein localises to the cell outer membrane. Is inhibited in vitro by typical serine protease inhibitors like diisopropyl fluorophosphate, Pefablock, and 3,4-dichloroisocoumarin, but not by typical cysteine class inhibitors such as E-64 or iododoacetic acid. In terms of biological role, catalyzes the removal of dipeptides from the N-terminus of oligopeptides. Shows a broad specificity for both aliphatic and aromatic residues in the P1 position, with glycine or proline being not acceptable in this position. Most potently cleaves the synthetic substrate Met-Leu-methylcoumaryl-7-amide (Met-Leu-MCA), Leu-Arg-MCA and Lys-Ala-MCA to a lesser extent. Is likely involved in amino acid metabolism and bacterial growth of asaccharolytic P.gingivalis, that utilizes amino acids from extracellular proteinaceous nutrients as energy and carbon sources. The protein is Dipeptidyl-peptidase 7 of Porphyromonas gingivalis (strain ATCC 33277 / DSM 20709 / CIP 103683 / JCM 12257 / NCTC 11834 / 2561).